The chain runs to 256 residues: Thiazole synthase (256 aa).

K96 (schiff-base intermediate with DXP) is an active-site residue. 1-deoxy-D-xylulose 5-phosphate is bound by residues G157, 183–184 (AG), and 205–206 (NT).

It belongs to the ThiG family. In terms of assembly, homotetramer. Forms heterodimers with either ThiH or ThiS.

It localises to the cytoplasm. It catalyses the reaction [ThiS sulfur-carrier protein]-C-terminal-Gly-aminoethanethioate + 2-iminoacetate + 1-deoxy-D-xylulose 5-phosphate = [ThiS sulfur-carrier protein]-C-terminal Gly-Gly + 2-[(2R,5Z)-2-carboxy-4-methylthiazol-5(2H)-ylidene]ethyl phosphate + 2 H2O + H(+). Its pathway is cofactor biosynthesis; thiamine diphosphate biosynthesis. Functionally, catalyzes the rearrangement of 1-deoxy-D-xylulose 5-phosphate (DXP) to produce the thiazole phosphate moiety of thiamine. Sulfur is provided by the thiocarboxylate moiety of the carrier protein ThiS. In vitro, sulfur can be provided by H(2)S. The chain is Thiazole synthase from Clostridioides difficile (strain 630) (Peptoclostridium difficile).